The sequence spans 365 residues: Phosphate acyltransferase (365 aa).

The protein belongs to the PlsX family. In terms of assembly, homodimer. Probably interacts with PlsY.

The protein resides in the cytoplasm. It catalyses the reaction a fatty acyl-[ACP] + phosphate = an acyl phosphate + holo-[ACP]. The protein operates within lipid metabolism; phospholipid metabolism. Its function is as follows. Catalyzes the reversible formation of acyl-phosphate (acyl-PO(4)) from acyl-[acyl-carrier-protein] (acyl-ACP). This enzyme utilizes acyl-ACP as fatty acyl donor, but not acyl-CoA. The chain is Phosphate acyltransferase from Klebsiella pneumoniae subsp. pneumoniae (strain ATCC 700721 / MGH 78578).